A 332-amino-acid polypeptide reads, in one-letter code: Oxygen-dependent coproporphyrinogen-III oxidase (332 aa).

Position 119 (Ser-119) interacts with coproporphyrinogen III. The active-site Proton donor is the His-133. Coproporphyrinogen III is bound by residues 135–137 and 284–285; these read NVR and GR.

Belongs to the aerobic coproporphyrinogen-III oxidase family. As to quaternary structure, homodimer.

The catalysed reaction is coproporphyrinogen III + O2 + 2 H(+) = protoporphyrinogen IX + 2 CO2 + 2 H2O. The protein operates within porphyrin-containing compound metabolism; protoporphyrin-IX biosynthesis; protoporphyrinogen-IX from coproporphyrinogen-III (O2 route): step 1/1. Involved in the heme biosynthesis. Catalyzes the aerobic oxidative decarboxylation of propionate groups of rings A and B of coproporphyrinogen-III to yield the vinyl groups in protoporphyrinogen-IX. The chain is Oxygen-dependent coproporphyrinogen-III oxidase (cpox) from Dictyostelium discoideum (Social amoeba).